The sequence spans 1012 residues: Vacuolar membrane protease (1012 aa).

Residues 1 to 60 lie on the Cytoplasmic side of the membrane; sequence MRRSTDPRNLLVRRGPLLVDGESAISELDPGFFPTGDAPKMSSTTRRRFNLIAFTPGPVT. Residues 61-81 traverse the membrane as a helical segment; sequence VISSLVYLALLIPLLLVHTIV. The Vacuolar portion of the chain corresponds to 82-432; that stretch reads PSAPKSNPKG…SFAVFRLHTL (351 aa). The N-linked (GlcNAc...) asparagine glycan is linked to Asn159. 2 residues coordinate Zn(2+): His215 and Asp227. The Proton acceptor role is filled by Glu261. 3 residues coordinate Zn(2+): Glu262, Glu287, and His360. Residues 433–453 form a helical membrane-spanning segment; the sequence is FAISVTLLVVCPIVLFVIGII. Residues 454–487 are Cytoplasmic-facing; that stretch reads LSKMDKMYLFSIHETIPETKEKVSVRGLRGLFRY. A helical membrane pass occupies residues 488 to 508; that stretch reads PIILVVSSGILIGLSYLLAKV. The Vacuolar segment spans residues 509–518; it reads NPFIVHSSSY. A helical membrane pass occupies residues 519–539; that stretch reads AVWSMMLSSWIFMTWFLSCIA. Residues 540–550 lie on the Cytoplasmic side of the membrane; it reads DFFRPSALHRA. A helical membrane pass occupies residues 551 to 571; the sequence is YTFTWQLLVMWVLLVISTVYV. The Vacuolar segment spans residues 572–575; sequence NQHD. The helical transmembrane segment at 576 to 596 threads the bilayer; it reads IAAGYFIVFYFAGTFLATLIS. The Cytoplasmic segment spans residues 597-710; sequence YLELFALPNK…WSASLPTWTW (114 aa). Residues 614–629 show a composition bias toward polar residues; the sequence is SQYPSRLGSNRSSRIL. The segment at 614–660 is disordered; that stretch reads SQYPSRLGSNRSSRILSPSADELPTGGDNNGEIYDGEEEPTESSSLL. A helical transmembrane segment spans residues 711-731; the sequence is VLQFLFVGPVVIMFIGQLGLF. At 732 to 743 the chain is on the vacuolar side; the sequence is LTSAMNQVGADG. The chain crosses the membrane as a helical span at residues 744 to 764; the sequence is VGLLVVYIAIAVFSVLLLIPL. At 765-777 the chain is on the cytoplasmic side; the sequence is SPFIHRFTYHVPT. Residues 778–798 form a helical membrane-spanning segment; the sequence is FLLLVFIATLIYNLAAFPFSA. Residues 799–1012 lie on the Vacuolar side of the membrane; the sequence is ENRLKIFFVQ…DGLVEVSRGF (214 aa). N-linked (GlcNAc...) asparagine glycosylation is found at Asn842 and Asn878.

Belongs to the peptidase M28 family. The cofactor is Zn(2+).

The protein localises to the vacuole membrane. Functionally, may be involved in vacuolar sorting and osmoregulation. This is Vacuolar membrane protease from Coccidioides posadasii (strain C735) (Valley fever fungus).